We begin with the raw amino-acid sequence, 690 residues long: Eukaryotic translation initiation factor 3 subunit B (690 aa).

The segment covering 1 to 11 has biased composition (basic and acidic residues); the sequence is MAKKKSEEHSG. The disordered stretch occupies residues 1–36; that stretch reads MAKKKSEEHSGADANDSDYTEEPNFDDPPNFVDNIS. The span at 15-25 shows a compositional bias: acidic residues; sequence NDSDYTEEPNF. In terms of domain architecture, RRM spans 57–141; that stretch reads SVVVVDNMPK…YTFAVNLFTD (85 aa). WD repeat units follow at residues 207-246, 292-331, 334-369, 442-484, and 530-575; these read TRER…KIQK, GDGM…LLDL, IKIP…TLME, EIRE…KPSL, and PDHF…IRRT. The stretch at 614–645 forms a coiled coil; it reads QKDRLRLTRASKELLEKRSQLRETFMEYRNKR.

This sequence belongs to the eIF-3 subunit B family. In terms of assembly, component of the eukaryotic translation initiation factor 3 (eIF-3) complex. The eIF-3 complex interacts with pix. Interacts with mxt.

Its subcellular location is the cytoplasm. Functionally, RNA-binding component of the eukaryotic translation initiation factor 3 (eIF-3) complex, which is involved in protein synthesis of a specialized repertoire of mRNAs and, together with other initiation factors, stimulates binding of mRNA and methionyl-tRNAi to the 40S ribosome. The eIF-3 complex specifically targets and initiates translation of a subset of mRNAs involved in cell proliferation. The sequence is that of Eukaryotic translation initiation factor 3 subunit B from Drosophila virilis (Fruit fly).